We begin with the raw amino-acid sequence, 602 residues long: DEAD-box ATP-dependent RNA helicase 53 (602 aa).

A compositionally biased stretch (low complexity) spans 33–43 (ASPLDPCRGPA). The segment at 33–76 (ASPLDPCRGPAAPEPPRRRAFHGSPSPLGFRSTPASWSSPEAGA) is disordered. The Q motif motif lies at 84-112 (LEVARLGISPWIVERLAARGITRLFPIQR). The region spanning 115 to 288 (LDPAMQGKDM…SKYLKDPIII (174 aa)) is the Helicase ATP-binding domain. 128–135 (ARTGTGKT) is an ATP binding site. The DEAD box motif lies at 236-239 (DEAD). One can recognise a Helicase C-terminal domain in the interval 317 to 462 (ILGPLIKEHA…LPKIEVADEA (146 aa)). Residues 503 to 602 (FGDFDGFGSS…GRSGGFDDSN (100 aa)) form a disordered region.

The protein belongs to the DEAD box helicase family. DDX21/DDX50 subfamily.

It catalyses the reaction ATP + H2O = ADP + phosphate + H(+). This is DEAD-box ATP-dependent RNA helicase 53 from Oryza sativa subsp. japonica (Rice).